The sequence spans 123 residues: Large ribosomal subunit protein bL12 (123 aa).

Residue K84 is modified to N6-methyllysine. The tract at residues 94–123 (PATLKEGMSKEDGDEAKTKLEEAGASVELK) is disordered. Positions 100–115 (GMSKEDGDEAKTKLEE) are enriched in basic and acidic residues.

This sequence belongs to the bacterial ribosomal protein bL12 family. As to quaternary structure, homodimer. Part of the ribosomal stalk of the 50S ribosomal subunit. Forms a multimeric L10(L12)X complex, where L10 forms an elongated spine to which 2 to 4 L12 dimers bind in a sequential fashion. Binds GTP-bound translation factors.

Its function is as follows. Seems to be the binding site for several of the factors involved in protein synthesis and appears to be essential for accurate translation. Functionally, forms part of the ribosomal stalk which helps the ribosome interact with GTP-bound translation factors. Is thus essential for accurate translation. This is Large ribosomal subunit protein bL12 from Halophilic eubacterium NRCC 41227.